Reading from the N-terminus, the 811-residue chain is Ribonucleoside-diphosphate reductase large chain (811 aa).

The ATP-cone domain maps to 1 to 92 (MFVYKRDGRQ…VSNLHKQTEK (92 aa)). Residues 5 to 6 (KR), 11 to 17 (EKVAFDK), Thr-53, and Asp-57 contribute to the ATP site. GDP contacts are provided by Ser-202 and Ser-217. The cysteines at positions 218 and 444 are disulfide-linked. Residues 226 to 228 (DSI), Lys-243, Arg-256, and 263 to 264 (AG) contribute to the dTTP site. A GDP-binding site is contributed by Asn-427. Asn-427 serves as the catalytic Proton acceptor. The Cysteine radical intermediate role is filled by Cys-429. Residues Glu-431 and 603–606 (TAST) each bind GDP. Glu-431 serves as the catalytic Proton acceptor.

Belongs to the ribonucleoside diphosphate reductase large chain family. Heterodimer of a large and a small subunit. Interacts with SPD1.

It catalyses the reaction a 2'-deoxyribonucleoside 5'-diphosphate + [thioredoxin]-disulfide + H2O = a ribonucleoside 5'-diphosphate + [thioredoxin]-dithiol. Under complex allosteric control mediated by deoxynucleoside triphosphates and ATP binding to separate specificity and activation sites on the large subunit. The type of nucleotide bound at the specificity site determines substrate preference. It seems probable that ATP makes the enzyme reduce CDP and UDP, dGTP favors ADP reduction and dTTP favors GDP reduction. Stimulated by ATP and inhibited by dATP binding to the activity site. Functionally, provides the precursors necessary for DNA synthesis. Catalyzes the biosynthesis of deoxyribonucleotides from the corresponding ribonucleotides. The polypeptide is Ribonucleoside-diphosphate reductase large chain (cdc22) (Schizosaccharomyces pombe (strain 972 / ATCC 24843) (Fission yeast)).